We begin with the raw amino-acid sequence, 223 residues long: Peptidyl-tRNA hydrolase (223 aa).

Residue Y16 participates in tRNA binding. H21 acts as the Proton acceptor in catalysis. Residues F67, N69, and N113 each coordinate tRNA.

Belongs to the PTH family. In terms of assembly, monomer.

It localises to the cytoplasm. It catalyses the reaction an N-acyl-L-alpha-aminoacyl-tRNA + H2O = an N-acyl-L-amino acid + a tRNA + H(+). Functionally, hydrolyzes ribosome-free peptidyl-tRNAs (with 1 or more amino acids incorporated), which drop off the ribosome during protein synthesis, or as a result of ribosome stalling. In terms of biological role, catalyzes the release of premature peptidyl moieties from peptidyl-tRNA molecules trapped in stalled 50S ribosomal subunits, and thus maintains levels of free tRNAs and 50S ribosomes. In Helicobacter hepaticus (strain ATCC 51449 / 3B1), this protein is Peptidyl-tRNA hydrolase.